A 271-amino-acid chain; its full sequence is Shikimate dehydrogenase (NADP(+)) (271 aa).

Residues S14–S16 and T61 each bind shikimate. K65 functions as the Proton acceptor in the catalytic mechanism. Residues N86 and D101 each coordinate shikimate. NADP(+) contacts are provided by residues G125–A129, N148–R153, and M212. A shikimate-binding site is contributed by Y214. G236 is a binding site for NADP(+).

This sequence belongs to the shikimate dehydrogenase family. As to quaternary structure, homodimer.

It carries out the reaction shikimate + NADP(+) = 3-dehydroshikimate + NADPH + H(+). Its pathway is metabolic intermediate biosynthesis; chorismate biosynthesis; chorismate from D-erythrose 4-phosphate and phosphoenolpyruvate: step 4/7. Involved in the biosynthesis of the chorismate, which leads to the biosynthesis of aromatic amino acids. Catalyzes the reversible NADPH linked reduction of 3-dehydroshikimate (DHSA) to yield shikimate (SA). In Edwardsiella ictaluri (strain 93-146), this protein is Shikimate dehydrogenase (NADP(+)).